Reading from the N-terminus, the 277-residue chain is NADPH-dependent 7-cyano-7-deazaguanine reductase (277 aa).

83-85 (VES) serves as a coordination point for substrate. Residue 85–86 (SK) participates in NADPH binding. The Thioimide intermediate role is filled by Cys-184. Catalysis depends on Asp-191, which acts as the Proton donor. 223–224 (HE) contributes to the substrate binding site. 252-253 (RG) serves as a coordination point for NADPH.

Belongs to the GTP cyclohydrolase I family. QueF type 2 subfamily. As to quaternary structure, homodimer.

The protein resides in the cytoplasm. The catalysed reaction is 7-aminomethyl-7-carbaguanine + 2 NADP(+) = 7-cyano-7-deazaguanine + 2 NADPH + 3 H(+). It functions in the pathway tRNA modification; tRNA-queuosine biosynthesis. Its function is as follows. Catalyzes the NADPH-dependent reduction of 7-cyano-7-deazaguanine (preQ0) to 7-aminomethyl-7-deazaguanine (preQ1). The sequence is that of NADPH-dependent 7-cyano-7-deazaguanine reductase from Cupriavidus metallidurans (strain ATCC 43123 / DSM 2839 / NBRC 102507 / CH34) (Ralstonia metallidurans).